We begin with the raw amino-acid sequence, 108 residues long: UPF0145 protein Fnod_0426 (108 aa).

The protein belongs to the UPF0145 family.

The protein is UPF0145 protein Fnod_0426 of Fervidobacterium nodosum (strain ATCC 35602 / DSM 5306 / Rt17-B1).